We begin with the raw amino-acid sequence, 678 residues long: UvrABC system protein B (678 aa).

Residues 35-422 (EGVSDGLMFQ…ADNVVEQVVR (388 aa)) enclose the Helicase ATP-binding domain. Position 48–55 (48–55 (GVTGSGKT)) interacts with ATP. The Beta-hairpin signature appears at 101–124 (YYDYYQPEAYVPTRDLFIEKDSSI). The Helicase C-terminal domain maps to 439–605 (QVDDLLGEIH…GVSKAVRELI (167 aa)). Positions 633 to 668 (AREIRRLEKLMMDHARNLEFEQAAAARDALNALKSR) constitute a UVR domain.

The protein belongs to the UvrB family. As to quaternary structure, forms a heterotetramer with UvrA during the search for lesions. Interacts with UvrC in an incision complex.

The protein localises to the cytoplasm. In terms of biological role, the UvrABC repair system catalyzes the recognition and processing of DNA lesions. A damage recognition complex composed of 2 UvrA and 2 UvrB subunits scans DNA for abnormalities. Upon binding of the UvrA(2)B(2) complex to a putative damaged site, the DNA wraps around one UvrB monomer. DNA wrap is dependent on ATP binding by UvrB and probably causes local melting of the DNA helix, facilitating insertion of UvrB beta-hairpin between the DNA strands. Then UvrB probes one DNA strand for the presence of a lesion. If a lesion is found the UvrA subunits dissociate and the UvrB-DNA preincision complex is formed. This complex is subsequently bound by UvrC and the second UvrB is released. If no lesion is found, the DNA wraps around the other UvrB subunit that will check the other stand for damage. This is UvrABC system protein B from Bordetella pertussis (strain Tohama I / ATCC BAA-589 / NCTC 13251).